The sequence spans 776 residues: 1,4-alpha-glucan branching enzyme GlgB (776 aa).

The Nucleophile role is filled by aspartate 431. Glutamate 484 serves as the catalytic Proton donor.

This sequence belongs to the glycosyl hydrolase 13 family. GlgB subfamily. In terms of assembly, monomer.

The enzyme catalyses Transfers a segment of a (1-&gt;4)-alpha-D-glucan chain to a primary hydroxy group in a similar glucan chain.. The protein operates within glycan biosynthesis; glycogen biosynthesis. Functionally, catalyzes the formation of the alpha-1,6-glucosidic linkages in glycogen by scission of a 1,4-alpha-linked oligosaccharide from growing alpha-1,4-glucan chains and the subsequent attachment of the oligosaccharide to the alpha-1,6 position. This Trichodesmium erythraeum (strain IMS101) protein is 1,4-alpha-glucan branching enzyme GlgB.